The chain runs to 712 residues: Copper amine oxidase 1 (712 aa).

319-330 (AFDLGEYGAGYL) contributes to the substrate binding site. The Proton acceptor role is filled by Asp-321. An intrachain disulfide couples Cys-340 to Cys-366. 404-409 (AANYEY) contributes to the substrate binding site. The Schiff-base intermediate with substrate; via topaquinone role is filled by Tyr-407. 2',4',5'-topaquinone is present on Tyr-407. Cu cation-binding residues include His-458 and His-460. Residues Asp-616 and Ile-617 each coordinate Mn(2+). Position 627 (His-627) interacts with Cu cation.

Belongs to the copper/topaquinone oxidase family. In terms of assembly, homodimer. It depends on Cu cation as a cofactor. Zn(2+) serves as cofactor. Requires L-topaquinone as cofactor. Mn(2+) is required as a cofactor. Post-translationally, topaquinone (TPQ) is generated by copper-dependent autoxidation of a specific tyrosyl residue.

Its subcellular location is the cytoplasm. It catalyses the reaction a primary methyl amine + O2 + H2O = an aldehyde + H2O2 + NH4(+). Copper amine oxidase involved in the metabolism of xenobiotic and biogenic amines. Capable of catalyzing the oxidative deamination of primary amines such as ethylamine as alternate sources of nitrogen to support growth. This is Copper amine oxidase 1 (cao1) from Schizosaccharomyces pombe (strain 972 / ATCC 24843) (Fission yeast).